Consider the following 594-residue polypeptide: MNGDSLLPYYTAQSGSSMSMFNTTMGRLQRQLYKGEYDIFKYAPIFGSDFIQITKRGEVIDVHNRVRMVTMGIARTSPILPLPDVMLLARPATGCEEYAGHGQATKRKKRKAAKNLELTRLLPLKFVRISVHNHEKQQLRLKFATGRSCYLQLCPALNTRDDLFAYWEKLIYLLRPPMESNSSTCGIPAEDMMWMPVFQEDRRSLEAVDLQGKGDQDQVSIRSLHMVSEVCGATSAAYAGGEGLQHDFHKPTNVLNVSIPKTSTELAEEPATGVTKEAAAAGAAAGAATGTVAGALSVAAANSAPGQVSVAIAGVATIGAGGSKSNMAIAGTASMAPNSTKVAVAGAAGKSSEHVSSTSMSLSREGSMSLAIAGVELTSRTAAETDMDAAAGLPVSTRQSKSSLSGQHGRERTQASAEACKEGRERREKDKALGRSSRRRRTGESRHKTRGDKIARKSSSRSSFSHRASRDGKKEKGCSSPGSSRHGESHKGVSHTPISKESRTSHKSGRSSSTTSSGSSKRLGRISSFLRNVRANLTTKAVGTPHGRDVDIMAKTVERSTNVANAETAEGGQGLEMVGSMTPDIMETMTFETH.

The segment at alanine 390–arginine 525 is disordered. Over residues serine 396–glycine 406 the composition is skewed to polar residues. 3 stretches are compositionally biased toward basic and acidic residues: residues histidine 408 to leucine 433, threonine 442 to alanine 455, and alanine 468 to glycine 477. Positions arginine 510–lysine 521 are enriched in low complexity.

It belongs to the GARIN family. Interacts (via N-terminus) with RAB2B (in GTP-bound form).

The protein localises to the golgi apparatus. RAB2B effector protein required for the compacted Golgi morphology, probably through interaction with small GTPase RAB2B. In Macaca fascicularis (Crab-eating macaque), this protein is Golgi-associated RAB2 interactor protein 4 (GARIN4).